Reading from the N-terminus, the 71-residue chain is Small ribosomal subunit protein bS21 (71 aa).

Positions 48–59 are enriched in basic residues; the sequence is KAAAAVKRHAKK. The tract at residues 48–71 is disordered; sequence KAAAAVKRHAKKVQREQRRRERLY. Residues 60 to 71 show a composition bias toward basic and acidic residues; that stretch reads VQREQRRRERLY.

This sequence belongs to the bacterial ribosomal protein bS21 family.

The protein is Small ribosomal subunit protein bS21 of Azotobacter vinelandii (strain DJ / ATCC BAA-1303).